The following is a 326-amino-acid chain: Probable cell division protein WhiA (326 aa).

Positions 275–308 (SLDELGHHADPPMTKDAVAGRIRRLLAMADKKAV) form a DNA-binding region, H-T-H motif.

The protein belongs to the WhiA family.

Its function is as follows. Involved in cell division and chromosome segregation. The polypeptide is Probable cell division protein WhiA (Clavibacter michiganensis subsp. michiganensis (strain NCPPB 382)).